Consider the following 211-residue polypeptide: Histidine biosynthesis bifunctional protein HisIE (211 aa).

Residues 1 to 122 (MSFKAAEVSS…DAQEESQMVW (122 aa)) form a phosphoribosyl-AMP cyclohydrolase region. The segment at 123 to 211 (LHQLEQLLAA…VVNKLKERHK (89 aa)) is phosphoribosyl-ATP pyrophosphohydrolase.

It in the N-terminal section; belongs to the PRA-CH family. The protein in the C-terminal section; belongs to the PRA-PH family.

The protein localises to the cytoplasm. The catalysed reaction is 1-(5-phospho-beta-D-ribosyl)-ATP + H2O = 1-(5-phospho-beta-D-ribosyl)-5'-AMP + diphosphate + H(+). It catalyses the reaction 1-(5-phospho-beta-D-ribosyl)-5'-AMP + H2O = 1-(5-phospho-beta-D-ribosyl)-5-[(5-phospho-beta-D-ribosylamino)methylideneamino]imidazole-4-carboxamide. The protein operates within amino-acid biosynthesis; L-histidine biosynthesis; L-histidine from 5-phospho-alpha-D-ribose 1-diphosphate: step 2/9. It functions in the pathway amino-acid biosynthesis; L-histidine biosynthesis; L-histidine from 5-phospho-alpha-D-ribose 1-diphosphate: step 3/9. This Vibrio parahaemolyticus serotype O3:K6 (strain RIMD 2210633) protein is Histidine biosynthesis bifunctional protein HisIE.